A 166-amino-acid polypeptide reads, in one-letter code: Ferric nitrobindin-like protein (166 aa).

A GXWXGXG motif is present at residues 21–27 (GHWEGEG).

This sequence belongs to the nitrobindin family.

The polypeptide is Ferric nitrobindin-like protein (Cutibacterium acnes (strain DSM 16379 / KPA171202) (Propionibacterium acnes)).